A 294-amino-acid chain; its full sequence is Bidirectional sugar transporter SWEET13 (294 aa).

The Extracellular portion of the chain corresponds to Met-1–Leu-7. Residues Trp-8–Val-28 traverse the membrane as a helical segment. Residues Phe-10–Lys-97 enclose the MtN3/slv 1 domain. Residues Pro-29 to Gly-42 are Cytoplasmic-facing. A helical transmembrane segment spans residues Phe-43–Met-63. Topologically, residues Gln-64–Ala-69 are extracellular. Residues Phe-70 to Phe-90 form a helical membrane-spanning segment. Over Val-91–Lys-104 the chain is Cytoplasmic. Residues Val-105–Thr-125 traverse the membrane as a helical segment. Residues Lys-126–Lys-132 lie on the Extracellular side of the membrane. The helical transmembrane segment at Val-133–Met-153 threads the bilayer. A MtN3/slv 2 domain is found at Val-133–Tyr-216. Topologically, residues Arg-154–Pro-166 are cytoplasmic. A helical transmembrane segment spans residues Phe-167–Ile-187. Residues Lys-188–Val-192 lie on the Extracellular side of the membrane. The helical transmembrane segment at Ala-193–Phe-213 threads the bilayer. The Cytoplasmic segment spans residues Lys-214–Val-294. Residues Lys-273–Val-294 form a disordered region. The span at Asp-279–Val-294 shows a compositional bias: basic and acidic residues.

This sequence belongs to the SWEET sugar transporter family. As to quaternary structure, forms heterooligomers with SWEET1, SWEET3, SWEET6, SWEET7, SWEET8, SWEET9, SWEET11 and SWEET17. In terms of tissue distribution, expressed at low levels in leaves.

The protein resides in the cell membrane. In terms of biological role, mediates both low-affinity uptake and efflux of sugar across the plasma membrane. Involved in nurturing the male gametophyte. This is Bidirectional sugar transporter SWEET13 from Arabidopsis thaliana (Mouse-ear cress).